The primary structure comprises 551 residues: GMP synthase [glutamine-hydrolyzing] (551 aa).

The tract at residues 1-28 is disordered; that stretch reads MTSSPTAAARTEGEAAPTVPTQVESGTA. A compositionally biased stretch (polar residues) spans 19–28; it reads VPTQVESGTA. A Glutamine amidotransferase type-1 domain is found at 37 to 227; it reads MVAILDFGSQ…VYHICGCEPE (191 aa). The active-site Nucleophile is C114. Catalysis depends on residues H201 and E203. Residues 228–426 form the GMPS ATP-PPase domain; that stretch reads WTTAAFIEEA…LGLPEEIVQR (199 aa). 255–261 provides a ligand contact to ATP; that stretch reads SGGVDSS.

As to quaternary structure, homodimer.

The enzyme catalyses XMP + L-glutamine + ATP + H2O = GMP + L-glutamate + AMP + diphosphate + 2 H(+). It functions in the pathway purine metabolism; GMP biosynthesis; GMP from XMP (L-Gln route): step 1/1. In terms of biological role, catalyzes the synthesis of GMP from XMP. This is GMP synthase [glutamine-hydrolyzing] from Gloeobacter violaceus (strain ATCC 29082 / PCC 7421).